The primary structure comprises 75 residues: Large ribosomal subunit protein bL31 (75 aa).

The protein belongs to the bacterial ribosomal protein bL31 family. Type A subfamily. As to quaternary structure, part of the 50S ribosomal subunit.

In terms of biological role, binds the 23S rRNA. In Rhodopseudomonas palustris (strain BisB5), this protein is Large ribosomal subunit protein bL31.